We begin with the raw amino-acid sequence, 229 residues long: Peroxiredoxin-like 2A (229 aa).

The thioredoxin fold stretch occupies residues 14–112; it reads MWSIGVGAFG…DELGVPLYAV (99 aa). Residues C85 and C88 each act as redox-active in the active site.

It belongs to the peroxiredoxin-like PRXL2 family. PRXL2A subfamily. Expressed by the principal cells of the epididymis. Detected in the head region of epididymal sperm (at protein level). Expressed in bone marrow.

The protein resides in the cytoplasm. It is found in the secreted. Involved in redox regulation of the cell. Acts as an antioxidant. Inhibits TNFSF11-induced NFKB1 and JUN activation and osteoclast differentiation. May affect bone resorption and help to maintain bone mass. Acts as a negative regulator of macrophage-mediated inflammation by inhibiting macrophage production of inflammatory cytokines, probably through suppression of the MAPK signaling pathway. This Rattus norvegicus (Rat) protein is Peroxiredoxin-like 2A.